We begin with the raw amino-acid sequence, 407 residues long: S-adenosylmethionine synthase (407 aa).

Histidine 15 provides a ligand contact to ATP. Position 17 (aspartate 17) interacts with Mg(2+). Residue glutamate 43 coordinates K(+). Residues glutamate 56 and glutamine 100 each contribute to the L-methionine site. Residues 100-110 (QSPDIAQGVDE) form a flexible loop region. ATP is bound by residues 171–173 (DGK), 248–249 (KF), aspartate 257, 263–264 (RK), alanine 280, and lysine 284. Aspartate 257 contributes to the L-methionine binding site. Lysine 288 contributes to the L-methionine binding site.

It belongs to the AdoMet synthase family. In terms of assembly, homotetramer; dimer of dimers. Requires Mg(2+) as cofactor. The cofactor is K(+).

The protein localises to the cytoplasm. The enzyme catalyses L-methionine + ATP + H2O = S-adenosyl-L-methionine + phosphate + diphosphate. The protein operates within amino-acid biosynthesis; S-adenosyl-L-methionine biosynthesis; S-adenosyl-L-methionine from L-methionine: step 1/1. Functionally, catalyzes the formation of S-adenosylmethionine (AdoMet) from methionine and ATP. The overall synthetic reaction is composed of two sequential steps, AdoMet formation and the subsequent tripolyphosphate hydrolysis which occurs prior to release of AdoMet from the enzyme. The protein is S-adenosylmethionine synthase of Synechococcus sp. (strain RCC307).